Reading from the N-terminus, the 251-residue chain is Gamma-gliadin (251 aa).

The N-terminal stretch at 1-19 (MKTLLILTILAMAITIGTA) is a signal peptide. The disordered stretch occupies residues 26 to 143 (SSQVQWPQQQ…QQSFPQQQPP (118 aa)). Positions 42–81 (QPFSQQPQQTFPQPQQTFPHQPQQQFPQPQQPQQQFLQPQ) are enriched in low complexity. Over residues 82-99 (QPFPQQPQQPYPQQPQQP) the composition is skewed to pro residues. Residues 100-139 (FPQTQQPQQLFPQSQQPQQQFSQPQQQFPQPQQPQQSFPQ) show a composition bias toward low complexity.

The protein belongs to the gliadin/glutenin family.

Its function is as follows. Gliadin is the major seed storage protein in wheat. In Triticum aestivum (Wheat), this protein is Gamma-gliadin.